Reading from the N-terminus, the 924-residue chain is Probable dipeptidyl-aminopeptidase B (924 aa).

Residues 1 to 104 (MPPFTYSDDT…DQRSPGDGQR (104 aa)) are disordered. The Cytoplasmic segment spans residues 1 to 111 (MPPFTYSDDT…GQRMDRSLRR (111 aa)). The segment covering 9 to 23 (DTLRSGRDRFRDHSP) has biased composition (basic and acidic residues). The segment covering 31–43 (SQETDSSASTTSI) has biased composition (polar residues). Basic and acidic residues-rich tracts occupy residues 47–58 (RIQERLDTKEFT) and 92–104 (SRSDQRSPGDGQR). The helical; Signal-anchor for type II membrane protein transmembrane segment at 112 to 132 (WLFIVSGVLVATWVIGLFVFV) threads the bilayer. Residues 133 to 924 (SSKAYKPSSS…GMKKRAAPTA (792 aa)) lie on the Vacuolar side of the membrane. Residues Asn231 and Asn364 are each glycosylated (N-linked (GlcNAc...) asparagine). The Charge relay system role is filled by Ser768. An N-linked (GlcNAc...) asparagine glycan is attached at Asn827. Catalysis depends on charge relay system residues Asp845 and His878.

It belongs to the peptidase S9B family.

The protein localises to the vacuole membrane. The catalysed reaction is Release of an N-terminal dipeptide, Xaa-Yaa-|-Zaa-, from a polypeptide, preferentially when Yaa is Pro, provided Zaa is neither Pro nor hydroxyproline.. Functionally, type IV dipeptidyl-peptidase which removes N-terminal dipeptides sequentially from polypeptides having unsubstituted N-termini provided that the penultimate residue is proline. This chain is Probable dipeptidyl-aminopeptidase B (DAPB), found in Sordaria macrospora (strain ATCC MYA-333 / DSM 997 / K(L3346) / K-hell).